The chain runs to 447 residues: Putative metabolite transport protein HI_0418 (447 aa).

Over 1–28 (MCKPQQKHYGRQVMNTQNSLKQVATATM) the chain is Cytoplasmic. Residues 29–49 (VGTAIEYFDNYIYAMAAVLVF) form a helical membrane-spanning segment. Topologically, residues 50–63 (NHQFFHAVDPLSGQ) are periplasmic. The chain crosses the membrane as a helical span at residues 64–84 (IAALSTLALTFIARPLGAILF). At 85 to 96 (GHFGDRFGRKNT) the chain is on the cytoplasmic side. A helical transmembrane segment spans residues 97 to 117 (FVMSLLLMGISTVVIGLLPTY). At 118–119 (DS) the chain is on the periplasmic side. A helical transmembrane segment spans residues 120–140 (IGIWATILLCLCRIGQGIGLG). Residues 141 to 167 (GEWGGAALVAVENAPEGKRGWYGTFPQ) are Cytoplasmic-facing. The chain crosses the membrane as a helical span at residues 168 to 188 (LGAPLGLLLANGVFLGITAIF). The Periplasmic portion of the chain corresponds to 189–194 (GQEAMT). A helical transmembrane segment spans residues 195-215 (EWAWRIPFLSSVILVAIGLYV). At 216 to 249 (RLKLTEAPIFLAALNKPKPKRLPMLEVVTTHFKP) the chain is on the cytoplasmic side. A helical membrane pass occupies residues 250–270 (FFLGMLVCIAGYVLFYIMIAF). Residues 271–295 (SQIYAKSAPTVSEAGYAMGLGFSPQ) are Periplasmic-facing. A helical membrane pass occupies residues 296-316 (IFTALLMASAVSLAITIAASG). Residues 317–325 (KYIDKIGRR) are Cytoplasmic-facing. A helical membrane pass occupies residues 326-346 (TWLIWTTVGVAIFGLSLPLFL). Topologically, residues 347–354 (ENGTTTSL) are periplasmic. A helical transmembrane segment spans residues 355 to 375 (FWFLFIGMGLIGMGYGPLASF). The Cytoplasmic portion of the chain corresponds to 376-390 (LPELFPTHARYSGAS). The helical transmembrane segment at 391–411 (LTYNIAGLFGASVAAIIALPL) threads the bilayer. The Periplasmic portion of the chain corresponds to 412 to 418 (NAHYGLK). A helical membrane pass occupies residues 419–439 (GVGIYLTLNAVLSLVGLWFIS). Residues 440 to 447 (ETKDKLLS) are Cytoplasmic-facing.

This sequence belongs to the major facilitator superfamily. Metabolite:H+ Symporter (MHS) family (TC 2.A.1.6) family.

It localises to the cell inner membrane. The chain is Putative metabolite transport protein HI_0418 from Haemophilus influenzae (strain ATCC 51907 / DSM 11121 / KW20 / Rd).